We begin with the raw amino-acid sequence, 537 residues long: Copine-3 (537 aa).

2 C2 domains span residues 1-115 (MAAQ…TRPL) and 124-247 (GKGS…PVEF). Ser-14 carries the phosphoserine modification. Positions 22, 28, 81, 83, 93, 154, and 160 each coordinate Ca(2+). Ser-197 is modified (phosphoserine). Positions 216, 218, and 224 each coordinate Ca(2+). Residue Ser-243 is modified to Phosphoserine. The VWFA domain occupies 291 to 513 (NFTVGVDFTG…AQCVLAEIPQ (223 aa)).

This sequence belongs to the copine family. In terms of assembly, monomer. Interacts with ERBB2 (preferentially with the tyrosine phosphorylated form); this interaction occurs at the cell membrane and is increased in a growth factor heregulin-dependent manner. Interacts with SHC1; this interaction may mediate the binding of CPNE3 with ERBB2. Interacts with RACK1. Ca(2+) serves as cofactor. Phosphorylated on serine and threonine residues. As to expression, expressed in breast and weakly in prostate and ovarian tissues. Expressed in neutrophils (at protein level). Widely expressed. Expressed in the brain. Expressed in neutrophil precursors from the bone marrow and peripheral blood. Expressed in primary breast tumors and ovarian endometrioid adenocarcinoma.

The protein resides in the nucleus. It localises to the cytoplasm. Its subcellular location is the cell membrane. It is found in the cell junction. The protein localises to the focal adhesion. Its function is as follows. Calcium-dependent phospholipid-binding protein that plays a role in ERBB2-mediated tumor cell migration in response to growth factor heregulin stimulation. The protein is Copine-3 of Homo sapiens (Human).